Consider the following 189-residue polypeptide: Protein GrpE (189 aa).

Over residues 1–10 (MADEQQQTLD) the composition is skewed to polar residues. A disordered region spans residues 1–21 (MADEQQQTLDPQAPEQTDAPE).

Belongs to the GrpE family. Homodimer.

The protein localises to the cytoplasm. Its function is as follows. Participates actively in the response to hyperosmotic and heat shock by preventing the aggregation of stress-denatured proteins, in association with DnaK and GrpE. It is the nucleotide exchange factor for DnaK and may function as a thermosensor. Unfolded proteins bind initially to DnaJ; upon interaction with the DnaJ-bound protein, DnaK hydrolyzes its bound ATP, resulting in the formation of a stable complex. GrpE releases ADP from DnaK; ATP binding to DnaK triggers the release of the substrate protein, thus completing the reaction cycle. Several rounds of ATP-dependent interactions between DnaJ, DnaK and GrpE are required for fully efficient folding. The protein is Protein GrpE of Pseudomonas paraeruginosa (strain DSM 24068 / PA7) (Pseudomonas aeruginosa (strain PA7)).